The following is a 337-amino-acid chain: Protein OPG055 (337 aa).

It belongs to the orthopoxvirus OPG055 family.

Its function is as follows. Stimulates increases in peripheral microtubule dynamics and may increase the motility of the infected cells, contributing to cell-to-cell spread of the virus. Seems to inhibit the signaling via the GTPase RHOA and DIAPH1/mDia. The sequence is that of Protein OPG055 (OPG055) from Homo sapiens (Human).